The primary structure comprises 220 residues: UPF0319 protein YccT (220 aa).

Positions 1–20 are cleaved as a signal peptide; it reads MKTGIVTTLIALCLPVSVFA.

This sequence belongs to the UPF0319 family.

The sequence is that of UPF0319 protein YccT from Escherichia coli O139:H28 (strain E24377A / ETEC).